Here is a 463-residue protein sequence, read N- to C-terminus: Glutamate--tRNA ligase 1 (463 aa).

The 'HIGH' region signature appears at 10–20 (PSPTGYLHIGG). The short motif at 238 to 242 (KLSKR) is the 'KMSKS' region element. An ATP-binding site is contributed by K241.

It belongs to the class-I aminoacyl-tRNA synthetase family. Glutamate--tRNA ligase type 1 subfamily. As to quaternary structure, monomer.

It localises to the cytoplasm. It catalyses the reaction tRNA(Glu) + L-glutamate + ATP = L-glutamyl-tRNA(Glu) + AMP + diphosphate. Functionally, catalyzes the attachment of glutamate to tRNA(Glu) in a two-step reaction: glutamate is first activated by ATP to form Glu-AMP and then transferred to the acceptor end of tRNA(Glu). This is Glutamate--tRNA ligase 1 from Helicobacter pylori (strain J99 / ATCC 700824) (Campylobacter pylori J99).